The sequence spans 31 residues: Photosystem II reaction center protein M (31 aa).

Residues 5–25 traverse the membrane as a helical segment; that stretch reads ILAFIATALLILVPTAFLLII.

It belongs to the PsbM family. In terms of assembly, PSII is composed of 1 copy each of membrane proteins PsbA, PsbB, PsbC, PsbD, PsbE, PsbF, PsbH, PsbI, PsbJ, PsbK, PsbL, PsbM, PsbT, PsbX, PsbY, PsbZ, Psb30/Ycf12, at least 3 peripheral proteins of the oxygen-evolving complex and a large number of cofactors. It forms dimeric complexes.

It localises to the plastid membrane. Its function is as follows. One of the components of the core complex of photosystem II (PSII). PSII is a light-driven water:plastoquinone oxidoreductase that uses light energy to abstract electrons from H(2)O, generating O(2) and a proton gradient subsequently used for ATP formation. It consists of a core antenna complex that captures photons, and an electron transfer chain that converts photonic excitation into a charge separation. This subunit is found at the monomer-monomer interface. The chain is Photosystem II reaction center protein M from Cuscuta exaltata (Tall dodder).